The sequence spans 175 residues: Large ribosomal subunit protein uL18 (175 aa).

This sequence belongs to the universal ribosomal protein uL18 family. In terms of assembly, part of the 50S ribosomal subunit. Contacts the 5S and 23S rRNAs.

Functionally, this is one of the proteins that bind and probably mediate the attachment of the 5S RNA into the large ribosomal subunit, where it forms part of the central protuberance. This is Large ribosomal subunit protein uL18 from Methanosphaerula palustris (strain ATCC BAA-1556 / DSM 19958 / E1-9c).